Reading from the N-terminus, the 306-residue chain is Peroxisome biogenesis factor 10 (306 aa).

Residues 1–52 are Peroxisomal matrix-facing; sequence MHLSAHIDPLQIILCTEIDEACIQFIKSQIEGIARACGPRMQANFEGVLIPY. A helical membrane pass occupies residues 53 to 84; it reads VDVLGKFLYRACCLRYATMGEEAARIVLAKQD. Over 85–147 the chain is Cytoplasmic; it reads RSKGLVLATT…PEAVISKEKH (63 aa). Residues 148–174 traverse the membrane as a helical segment; sequence LVYILNSFKPILLKLVSIIRFLCLTMK. Over 175–202 the chain is Peroxisomal matrix; that stretch reads GHCATVSQLLLGLKYISLDEINPEEKKK. Residues 203 to 219 form a helical membrane-spanning segment; that stretch reads VLTLLLLLGSRLIASIL. Over 220–306 the chain is Cytoplasmic; the sequence is QHSNSYFDQH…SSPSKIILLR (87 aa). Zn(2+) is bound by residues Cys-256, Cys-259, Cys-271, His-273, Cys-276, Cys-279, Cys-290, and Cys-293. The RING-type zinc-finger motif lies at 256-294; it reads CSLCMEFIHCPAATECGHIFCWSCINGWTSKKSECPLCR.

The protein belongs to the pex2/pex10/pex12 family. As to quaternary structure, component of the PEX2-PEX10-PEX12 retrotranslocation channel, composed of PEX2, PEX10 and PEX12.

It is found in the peroxisome membrane. The catalysed reaction is S-ubiquitinyl-[E2 ubiquitin-conjugating enzyme]-L-cysteine + [acceptor protein]-L-lysine = [E2 ubiquitin-conjugating enzyme]-L-cysteine + N(6)-ubiquitinyl-[acceptor protein]-L-lysine.. The protein operates within protein modification; protein ubiquitination. Its activity is regulated as follows. The E3 ubiquitin-protein ligase activity is stimulated by PEX12. Functionally, E3 ubiquitin-protein ligase component of a retrotranslocation channel required for peroxisome organization by mediating export of the PEX5 receptor from peroxisomes to the cytosol, thereby promoting PEX5 recycling. The retrotranslocation channel is composed of PEX2, PEX10 and PEX12; each subunit contributing transmembrane segments that coassemble into an open channel that specifically allows the passage of PEX5 through the peroxisomal membrane. PEX10 also regulates PEX5 recycling by acting as a E3 ubiquitin-protein ligase. When PEX5 recycling is compromised, PEX10 catalyzes polyubiquitination of PEX5 during its passage through the retrotranslocation channel, leading to its degradation. In Schizosaccharomyces pombe (strain 972 / ATCC 24843) (Fission yeast), this protein is Peroxisome biogenesis factor 10 (pas4).